Reading from the N-terminus, the 451-residue chain is uncharacterized protein (451 aa).

In terms of domain architecture, HD spans Arg-50 to Leu-147.

This is an uncharacterized protein from Methanocaldococcus jannaschii (strain ATCC 43067 / DSM 2661 / JAL-1 / JCM 10045 / NBRC 100440) (Methanococcus jannaschii).